A 178-amino-acid chain; its full sequence is ATP synthase subunit delta (178 aa).

It belongs to the ATPase delta chain family. As to quaternary structure, F-type ATPases have 2 components, F(1) - the catalytic core - and F(0) - the membrane proton channel. F(1) has five subunits: alpha(3), beta(3), gamma(1), delta(1), epsilon(1). F(0) has three main subunits: a(1), b(2) and c(10-14). The alpha and beta chains form an alternating ring which encloses part of the gamma chain. F(1) is attached to F(0) by a central stalk formed by the gamma and epsilon chains, while a peripheral stalk is formed by the delta and b chains.

It is found in the cell inner membrane. In terms of biological role, f(1)F(0) ATP synthase produces ATP from ADP in the presence of a proton or sodium gradient. F-type ATPases consist of two structural domains, F(1) containing the extramembraneous catalytic core and F(0) containing the membrane proton channel, linked together by a central stalk and a peripheral stalk. During catalysis, ATP synthesis in the catalytic domain of F(1) is coupled via a rotary mechanism of the central stalk subunits to proton translocation. Functionally, this protein is part of the stalk that links CF(0) to CF(1). It either transmits conformational changes from CF(0) to CF(1) or is implicated in proton conduction. This Marinomonas sp. (strain MWYL1) protein is ATP synthase subunit delta.